A 30-amino-acid chain; its full sequence is Alpha-conotoxin EIVA (30 aa).

Cystine bridges form between Cys2–Cys16, Cys3–Cys11, and Cys14–Cys24. 4-hydroxyproline occurs at positions 7, 13, 21, 22, and 27. Gly30 is modified (glycine amide).

Expressed by the venom duct.

The protein resides in the secreted. Alpha-conotoxins act on postsynaptic membranes, they bind to the nicotinic acetylcholine receptors (nAChR) and thus inhibit them. This toxin binds with high affinity to both fetal (alpha-1-beta-1-epsilon-delta (CHRNA1-CHRNB1-CHRND-CHRNE) subunits) and adult (alpha-1/beta-1/gamma/delta subunits) mammalian muscle nicotinic acetylcholine receptors (nAChR). In Conus ermineus (Agate cone), this protein is Alpha-conotoxin EIVA.